We begin with the raw amino-acid sequence, 94 residues long: Surfactant-associated protein 3 (94 aa).

As to expression, found in lung alveolar cells type I and II, as well as alveolar macrophages (at protein level). Detected also in testis and kidney. Expressed by different tissues of the ocular system like cornea, conjuctiva, lacrimal gland, eyelid and efferent tear ducts (at protein level). From these tissues is secreted into the tear film (at protein level).

It is found in the cytoplasm. It localises to the secreted. In terms of biological role, putative surfactant protein. May be involved in wound healing and in the reduction of the surface tension at the ocular surface. The protein is Surfactant-associated protein 3 (SFTA3) of Homo sapiens (Human).